Reading from the N-terminus, the 363-residue chain is Protein-glutamate methylesterase/protein-glutamine glutaminase 3 (363 aa).

The region spanning 8–125 (KVLCVDDSAL…RDGMLDYAEK (118 aa)) is the Response regulatory domain. Residue aspartate 59 is modified to 4-aspartylphosphate. Positions 164–356 (LVSTEKLIII…RRVMARLATM (193 aa)) constitute a CheB-type methylesterase domain. Active-site residues include serine 176, histidine 202, and aspartate 298.

The protein belongs to the CheB family. In terms of processing, phosphorylated by CheA. Phosphorylation of the N-terminal regulatory domain activates the methylesterase activity.

Its subcellular location is the cytoplasm. The enzyme catalyses [protein]-L-glutamate 5-O-methyl ester + H2O = L-glutamyl-[protein] + methanol + H(+). The catalysed reaction is L-glutaminyl-[protein] + H2O = L-glutamyl-[protein] + NH4(+). In terms of biological role, involved in chemotaxis. Part of a chemotaxis signal transduction system that modulates chemotaxis in response to various stimuli. Catalyzes the demethylation of specific methylglutamate residues introduced into the chemoreceptors (methyl-accepting chemotaxis proteins or MCP) by CheR. Also mediates the irreversible deamidation of specific glutamine residues to glutamic acid. This Burkholderia lata (strain ATCC 17760 / DSM 23089 / LMG 22485 / NCIMB 9086 / R18194 / 383) protein is Protein-glutamate methylesterase/protein-glutamine glutaminase 3.